A 541-amino-acid chain; its full sequence is L-ornithine N(5)-monooxygenase (541 aa).

Residues 50–58 (EKQPEFQWH) and Gln69 contribute to the FAD site. Substrate is bound at residue Lys74. Residue 223–226 (SGQS) coordinates NADP(+). Substrate is bound by residues 269–272 (NEIF) and Asn300. Residue 300 to 302 (NYS) coordinates NADP(+). The tract at residues 430 to 474 (TEIPKGPDGSLFDASEEEATWRPASPITPASPSPPSTPTSSALSQ) is disordered. An FAD-binding site is contributed by 520–522 (SLL). Substrate is bound at residue Ser523.

This sequence belongs to the lysine N(6)-hydroxylase/L-ornithine N(5)-oxygenase family. Homotetramer. It depends on FAD as a cofactor.

It carries out the reaction L-ornithine + NADPH + O2 = N(5)-hydroxy-L-ornithine + NADP(+) + H2O. It catalyses the reaction L-ornithine + NADH + O2 = N(5)-hydroxy-L-ornithine + NAD(+) + H2O. It participates in siderophore biosynthesis. L-ornithine N(5)-monooxygenase; part of the siderophore basidioferrin biosynthetic pathway. The biosynthesis of basidioferrin depends on the hydroxylation of ornithine to N(5)-hydroxyornithine, catalyzed by the monooxygenase SMO1. The second step, the acylation of N(5)-hydroxy-L-ornithine is catalyzed by a not yet identified N-acyltransferase. Finally, assembly of basidioferrin is catalyzed by the nonribosomal peptide synthase (NRPS) NPS2 via amide bond formation between three L-AHO molecules to release the linear L-AHO trimer. In Ceriporiopsis subvermispora (strain B) (White-rot fungus), this protein is L-ornithine N(5)-monooxygenase (SMO1).